A 24-amino-acid polypeptide reads, in one-letter code: Ascaphin-6 (24 aa).

Expressed by the skin glands.

It is found in the secreted. Its function is as follows. Antimicrobial peptide that shows higher potency against Gram-negative bacteria than against Gram-positive bacteria. Has a very week hemolytic activity. This is Ascaphin-6 from Ascaphus truei (Coastal tailed frog).